The primary structure comprises 124 residues: MPEPAKAAPKKGSKKAVTKTAGKGGKKRKRTRKESYAIYVYKVLKQVHPDTGISSKAMGIMNSFVNDIFERIAGEASRLAHYNKRSTITSREIQTAVRLLLPGELAKHAVSEGTKAVTKYTSSK.

The tract at residues 1 to 32 is disordered; that stretch reads MPEPAKAAPKKGSKKAVTKTAGKGGKKRKRTR. 2 positions are modified to N6-acetyllysine: Lys-6 and Lys-11. Residues 8-17 are compositionally biased toward basic residues; sequence APKKGSKKAV. Ser-13 carries the phosphoserine modification. An N6-acetyllysine mark is found at Lys-14 and Lys-19. A glycan (O-linked (GlcNAc) serine) is linked at Ser-111. Lys-119 is covalently cross-linked (Glycyl lysine isopeptide (Lys-Gly) (interchain with G-Cter in ubiquitin)).

Belongs to the histone H2B family. The nucleosome is a histone octamer containing two molecules each of H2A, H2B, H3 and H4 assembled in one H3-H4 heterotetramer and two H2A-H2B heterodimers. The octamer wraps approximately 147 bp of DNA. Post-translationally, monoubiquitination of Lys-119 by the BRE1 gives a specific tag for epigenetic transcriptional activation and is also prerequisite for histone H3 'Lys-4' and 'Lys-79' methylation. In terms of processing, phosphorylated during apoptosis; which facilitates apoptotic chromatin condensation. GlcNAcylation at Ser-111 promotes monoubiquitination of Lys-119. It fluctuates in response to extracellular glucose, and associates with transcribed genes.

The protein resides in the nucleus. Its subcellular location is the chromosome. Its function is as follows. Core component of nucleosome. Nucleosomes wrap and compact DNA into chromatin, limiting DNA accessibility to the cellular machineries which require DNA as a template. Histones thereby play a central role in transcription regulation, DNA repair, DNA replication and chromosomal stability. DNA accessibility is regulated via a complex set of post-translational modifications of histones, also called histone code, and nucleosome remodeling. This Danio rerio (Zebrafish) protein is Histone H2B 1/2.